Here is a 25-residue protein sequence, read N- to C-terminus: Caerin-1.6 (25 aa).

Position 25 is a leucine amide (Leu25).

This sequence belongs to the frog skin active peptide (FSAP) family. Caerin subfamily. In terms of tissue distribution, expressed by the skin dorsal glands.

Its subcellular location is the secreted. Antimicrobial peptide. Adopts an alpha helical conformation which can disrupt bacterial membranes. Strongly inhibits the formation of NO by neuronal nitric oxide synthase (nNOS) at micromolar concentrations. Acts by a non-competitive mechanism, probably by binding to calcium/calmodulin and as a consequence blocking calmodulin attachment to nNOS. In terms of biological role, does not show antimicrobial activity. The protein is Caerin-1.6 of Ranoidea chloris (Red-eyed tree frog).